The chain runs to 209 residues: Nascent polypeptide-associated complex subunit alpha (209 aa).

Basic and acidic residues predominate over residues 1–21 (MSNPRVEELPDEEPKKTTVQE). Disordered regions lie at residues 1–51 (MSNP…HNRN) and 121–175 (QLAS…DKDI). The segment covering 22-36 (HEDDSSDDSEVEEVG) has biased composition (acidic residues). In terms of domain architecture, NAC-A/B spans 49–114 (NRNEKKARKA…AKIEDVNAAA (66 aa)). A compositionally biased stretch (basic and acidic residues) spans 127–150 (AEDHSGHNHGEPSKAVEADEKKED). The span at 151-166 (KEDDEDEEEEEEEEVD) shows a compositional bias: acidic residues. In terms of domain architecture, UBA spans 170 to 209 (LEDKDIELVMTQANVSRNKAVKALKENDNDIVNSIMALSI).

This sequence belongs to the NAC-alpha family. As to quaternary structure, part of the nascent polypeptide-associated complex (NAC), consisting of EGD2 and EGD1. NAC associates with ribosomes via EGD1.

It is found in the cytoplasm. It localises to the nucleus. Functionally, component of the nascent polypeptide-associated complex (NAC), a dynamic component of the ribosomal exit tunnel, protecting the emerging polypeptides from interaction with other cytoplasmic proteins to ensure appropriate nascent protein targeting. The NAC complex also promotes mitochondrial protein import by enhancing productive ribosome interactions with the outer mitochondrial membrane and blocks the inappropriate interaction of ribosomes translating non-secretory nascent polypeptides with translocation sites in the membrane of the endoplasmic reticulum. EGD2 may also be involved in transcription regulation. In Gibberella zeae (strain ATCC MYA-4620 / CBS 123657 / FGSC 9075 / NRRL 31084 / PH-1) (Wheat head blight fungus), this protein is Nascent polypeptide-associated complex subunit alpha (EGD2).